Consider the following 429-residue polypeptide: Adenylosuccinate synthetase (429 aa).

GTP is bound by residues Gly12–Lys18 and Gly40–Thr42. Asp13 functions as the Proton acceptor in the catalytic mechanism. Positions 13 and 40 each coordinate Mg(2+). IMP is bound by residues Asp13–Lys16, Asn38–His41, Thr129, Arg143, Gln223, Thr238, and Arg302. His41 acts as the Proton donor in catalysis. Val298–Arg304 serves as a coordination point for substrate. Residues Arg304, Lys330 to Asp332, and Ser412 to Ser414 contribute to the GTP site.

Belongs to the adenylosuccinate synthetase family. In terms of assembly, homodimer. Requires Mg(2+) as cofactor.

The protein resides in the cytoplasm. It catalyses the reaction IMP + L-aspartate + GTP = N(6)-(1,2-dicarboxyethyl)-AMP + GDP + phosphate + 2 H(+). Its pathway is purine metabolism; AMP biosynthesis via de novo pathway; AMP from IMP: step 1/2. Functionally, plays an important role in the de novo pathway of purine nucleotide biosynthesis. Catalyzes the first committed step in the biosynthesis of AMP from IMP. This chain is Adenylosuccinate synthetase, found in Bartonella bacilliformis (strain ATCC 35685 / KC583 / Herrer 020/F12,63).